A 100-amino-acid chain; its full sequence is NADH-quinone oxidoreductase subunit K (100 aa).

Transmembrane regions (helical) follow at residues isoleucine 2 to isoleucine 22, isoleucine 29 to isoleucine 49, and leucine 63 to tryptophan 83.

Belongs to the complex I subunit 4L family. As to quaternary structure, NDH-1 is composed of 14 different subunits. Subunits NuoA, H, J, K, L, M, N constitute the membrane sector of the complex.

It localises to the cell inner membrane. The catalysed reaction is a quinone + NADH + 5 H(+)(in) = a quinol + NAD(+) + 4 H(+)(out). In terms of biological role, NDH-1 shuttles electrons from NADH, via FMN and iron-sulfur (Fe-S) centers, to quinones in the respiratory chain. The immediate electron acceptor for the enzyme in this species is believed to be ubiquinone. Couples the redox reaction to proton translocation (for every two electrons transferred, four hydrogen ions are translocated across the cytoplasmic membrane), and thus conserves the redox energy in a proton gradient. This is NADH-quinone oxidoreductase subunit K from Campylobacter curvus (strain 525.92).